The sequence spans 361 residues: Mitogen-activated protein kinase 14 (361 aa).

Residues 32 to 316 enclose the Protein kinase domain; sequence YVPIKPIGRG…VSDALLHPYM (285 aa). ATP is bound by residues 38–46 and Lys61; that span reads IGRGAYGVV. The active-site Proton acceptor is Asp158. Thr188 is subject to Phosphothreonine. A TXY motif is present at residues 188–190; sequence TEY. Tyr190 carries the post-translational modification Phosphotyrosine. Residue Thr193 is modified to Phosphothreonine.

This sequence belongs to the protein kinase superfamily. CMGC Ser/Thr protein kinase family. MAP kinase subfamily. Interacts with MKK3. Post-translationally, dually phosphorylated on Thr-188 and Tyr-190, which activates the enzyme.

It carries out the reaction L-seryl-[protein] + ATP = O-phospho-L-seryl-[protein] + ADP + H(+). It catalyses the reaction L-threonyl-[protein] + ATP = O-phospho-L-threonyl-[protein] + ADP + H(+). With respect to regulation, activated by threonine and tyrosine phosphorylation. The protein is Mitogen-activated protein kinase 14 (MPK14) of Arabidopsis thaliana (Mouse-ear cress).